We begin with the raw amino-acid sequence, 285 residues long: Inositol oxygenase (285 aa).

R29 contacts substrate. S33 carries the post-translational modification Phosphoserine. 85-87 provides a ligand contact to substrate; the sequence is DES. Residues H98, H123, and D124 each coordinate Fe cation. Substrate contacts are provided by residues K127 and 141–142; that span reads GD. H194, H220, and D253 together coordinate Fe cation. 220–221 serves as a coordination point for substrate; the sequence is HS.

Belongs to the myo-inositol oxygenase family. It depends on Fe cation as a cofactor. Kidney specific.

The protein resides in the cytoplasm. It carries out the reaction myo-inositol + O2 = D-glucuronate + H2O + H(+). The protein operates within polyol metabolism; myo-inositol degradation into D-glucuronate; D-glucuronate from myo-inositol: step 1/1. In Homo sapiens (Human), this protein is Inositol oxygenase (MIOX).